The chain runs to 236 residues: Phosphoribosylaminoimidazole-succinocarboxamide synthase (236 aa).

The protein belongs to the SAICAR synthetase family.

The catalysed reaction is 5-amino-1-(5-phospho-D-ribosyl)imidazole-4-carboxylate + L-aspartate + ATP = (2S)-2-[5-amino-1-(5-phospho-beta-D-ribosyl)imidazole-4-carboxamido]succinate + ADP + phosphate + 2 H(+). The protein operates within purine metabolism; IMP biosynthesis via de novo pathway; 5-amino-1-(5-phospho-D-ribosyl)imidazole-4-carboxamide from 5-amino-1-(5-phospho-D-ribosyl)imidazole-4-carboxylate: step 1/2. The chain is Phosphoribosylaminoimidazole-succinocarboxamide synthase from Campylobacter jejuni subsp. jejuni serotype O:2 (strain ATCC 700819 / NCTC 11168).